A 189-amino-acid polypeptide reads, in one-letter code: Accessory gene regulator protein B (189 aa).

5 helical membrane-spanning segments follow: residues 50–70, 83–103, 105–125, 143–163, and 164–184; these read VSLL…FFFI, LLCY…VGYV, VSSL…SIYA, KIKA…LNEP, and YQQL…PIFF.

It belongs to the AgrB family.

Its subcellular location is the cell membrane. Its function is as follows. Essential for the production of a quorum sensing system signal molecule, the autoinducing peptide (AIP). This quorum sensing system is responsible for the regulation of the expression of virulence factor genes. Involved in the proteolytic processing of AgrD, the precursor of AIP. The protein is Accessory gene regulator protein B of Staphylococcus saprophyticus subsp. saprophyticus (strain ATCC 15305 / DSM 20229 / NCIMB 8711 / NCTC 7292 / S-41).